The following is a 375-amino-acid chain: Probable protein-glutamate methylesterase BB_0415 (375 aa).

In terms of domain architecture, Response regulatory spans 6–120 (SVLIIEYFAV…SHEIKKEQII (115 aa)). Positions 183 to 375 (KLRKFDIIAI…KLLKAILINS (193 aa)) constitute a CheB-type methylesterase domain. Residues serine 195, histidine 221, and aspartate 317 contribute to the active site.

The catalysed reaction is [protein]-L-glutamate 5-O-methyl ester + H2O = L-glutamyl-[protein] + methanol + H(+). The polypeptide is Probable protein-glutamate methylesterase BB_0415 (Borreliella burgdorferi (strain ATCC 35210 / DSM 4680 / CIP 102532 / B31) (Borrelia burgdorferi)).